The following is a 143-amino-acid chain: Transcriptional regulator MraZ (143 aa).

2 SpoVT-AbrB domains span residues 5–47 and 76–119; these read EYRH…TQEE and ATEC…SEDR.

The protein belongs to the MraZ family. In terms of assembly, forms oligomers.

The protein localises to the cytoplasm. It is found in the nucleoid. The chain is Transcriptional regulator MraZ from Ligilactobacillus salivarius (strain UCC118) (Lactobacillus salivarius).